We begin with the raw amino-acid sequence, 5628 residues long: Polyketide synthase ThaG (5628 aa).

A Ketosynthase family 3 (KS3) 1 domain is found at 13–448 (HDDIAVIGIA…GTNAHVVLRE (436 aa)). Residues cysteine 184, histidine 319, and histidine 361 each act as for beta-ketoacyl synthase 1 activity in the active site. Disordered regions lie at residues 552–613 (GNLV…DGPT) and 1156–1183 (ASPGAASSGAAAPNAASDASRDTERAEA). The span at 559 to 589 (GPHDEQADHDGSGEHGEHGERARAGADDLSR) shows a compositional bias: basic and acidic residues. Low complexity predominate over residues 1156 to 1173 (ASPGAASSGAAAPNAASD). Residues 1174–1183 (ASRDTERAEA) show a composition bias toward basic and acidic residues. In terms of domain architecture, Carrier 1 spans 1209 to 1286 (AHGSARLPAL…RLAGHLATRL (78 aa)). Serine 1246 is modified (O-(pantetheine 4'-phosphoryl)serine). In terms of domain architecture, Ketosynthase family 3 (KS3) 2 spans 1373–1781 (YEPIAIVGMS…GTNAHVIVEA (409 aa)). Catalysis depends on for beta-ketoacyl synthase 2 activity residues cysteine 1529, histidine 1664, and histidine 1704. The segment at 1967–2099 (AREPGARERA…GVVDELNEPA (133 aa)) is N-terminal hotdog fold 1. In terms of domain architecture, PKS/mFAS DH 1 spans 1967 to 2261 (AREPGARERA…SARWRKLAGA (295 aa)). Histidine 1999 functions as the Proton acceptor; for dehydratase activity 1 in the catalytic mechanism. The segment at 2113–2261 (AGERVDGAAL…SARWRKLAGA (149 aa)) is C-terminal hotdog fold 1. Catalysis depends on aspartate 2175, which acts as the Proton donor; for dehydratase activity 1. A disordered region spans residues 2426–2446 (DADEDDRDGREPAGGPPLRDD). The region spanning 2702-2780 (PAARVDLHAL…AIARALDASA (79 aa)) is the Carrier 2 domain. The interval 2817–2836 (TPPDAGAPQRGAHAAAAEGS) is disordered. A compositionally biased stretch (low complexity) spans 2822 to 2835 (GAPQRGAHAAAAEG). The region spanning 2862–2935 (ARVGARLSAL…ELTDYFVRRH (74 aa)) is the Carrier 3 domain. Serine 2896 carries the O-(pantetheine 4'-phosphoryl)serine modification. The Ketosynthase family 3 (KS3) 3 domain maps to 3005–3430 (ADAIAVIGLA…GANAHVIVRE (426 aa)). Residues cysteine 3175, histidine 3310, and histidine 3351 each act as for beta-ketoacyl synthase 3 activity in the active site. The tract at residues 3526 to 3546 (PGKKQLRGNGRARRGDAPPAG) is disordered. An N-terminal hotdog fold 2 region spans residues 3621 to 3743 (HPMLDANRSE…GRSPSRAARG (123 aa)). Positions 3621 to 3895 (HPMLDANRSE…SRAAASWRTA (275 aa)) constitute a PKS/mFAS DH 2 domain. The active-site Proton acceptor; for dehydratase activity 2 is histidine 3650. The tract at residues 3758–3895 (RAAPAFDADA…SRAAASWRTA (138 aa)) is C-terminal hotdog fold 2. Aspartate 3818 acts as the Proton donor; for dehydratase activity 2 in catalysis. The segment at 3917–3942 (PAAESPSAATSTSAATSPAISTSAAT) is disordered. Residues 4840–4914 (TRTAALLRSL…ALAAYVGSQL (75 aa)) form the Carrier 4 domain. Serine 4874 bears the O-(pantetheine 4'-phosphoryl)serine mark. The disordered stretch occupies residues 4960–4992 (APRARTGADAPDTSLASSASSISSARASSPASP). A Ketosynthase family 3 (KS3) 4 domain is found at 4998–5424 (SFDVAIVGAS…GVNAHVVLEE (427 aa)). Catalysis depends on for beta-ketoacyl synthase 4 activity residues cysteine 5158, histidine 5293, and histidine 5339. Positions 5470–5544 (ARIEAVIRDA…ALRDHVAERI (75 aa)) constitute a Carrier 5 domain. Serine 5504 is subject to O-(pantetheine 4'-phosphoryl)serine. Residues 5573–5603 (VSEATEASDASEASDASEASEASEASEASKA) are disordered.

Pantetheine 4'-phosphate serves as cofactor.

The protein resides in the cytoplasm. Its pathway is antibiotic biosynthesis. In terms of biological role, involved in production of the polyketide antibiotic thailandamide. The sequence is that of Polyketide synthase ThaG from Burkholderia thailandensis (strain ATCC 700388 / DSM 13276 / CCUG 48851 / CIP 106301 / E264).